Here is a 667-residue protein sequence, read N- to C-terminus: Sterile alpha motif domain-containing protein 15 (667 aa).

The span at 1–18 (MAEVPEDYDSGPDEDGEP) shows a compositional bias: acidic residues. 2 disordered regions span residues 1 to 108 (MAEV…KSER) and 147 to 424 (SAME…IKSK). Composition is skewed to basic and acidic residues over residues 19–53 (ESER…HEPQ), 84–93 (IAKESKRDVP), 187–196 (ESLRVQHEET), and 228–266 (TKPD…KSSE). The span at 268-277 (AGLEPPEETQ) shows a compositional bias: acidic residues. Basic and acidic residues-rich tracts occupy residues 284 to 314 (MQRK…KSTD), 322 to 338 (EEIK…KPNE), 346 to 364 (EMMK…EEKN), and 381 to 422 (PRVE…EPIK). The SAM domain occupies 538-601 (WDPEKVAEWI…SRHTRELLEI (64 aa)).

The polypeptide is Sterile alpha motif domain-containing protein 15 (SAMD15) (Macaca fascicularis (Crab-eating macaque)).